The following is a 325-amino-acid chain: D-alanine--D-alanine ligase (325 aa).

The region spanning Lys-109–Glu-309 is the ATP-grasp domain. Cys-136 to Glu-191 provides a ligand contact to ATP. Residues Asp-262, Glu-276, and Asn-278 each contribute to the Mg(2+) site.

Belongs to the D-alanine--D-alanine ligase family. It depends on Mg(2+) as a cofactor. Requires Mn(2+) as cofactor.

It is found in the cytoplasm. The enzyme catalyses 2 D-alanine + ATP = D-alanyl-D-alanine + ADP + phosphate + H(+). Its pathway is cell wall biogenesis; peptidoglycan biosynthesis. Cell wall formation. In Solibacter usitatus (strain Ellin6076), this protein is D-alanine--D-alanine ligase.